We begin with the raw amino-acid sequence, 467 residues long: Glutamate--tRNA ligase (467 aa).

The 'HIGH' region signature appears at Pro-10–Gly-20. A 'KMSKS' region motif is present at residues Arg-238–Arg-242. ATP is bound at residue Lys-241.

The protein belongs to the class-I aminoacyl-tRNA synthetase family. Glutamate--tRNA ligase type 1 subfamily. In terms of assembly, monomer.

The protein localises to the cytoplasm. The enzyme catalyses tRNA(Glu) + L-glutamate + ATP = L-glutamyl-tRNA(Glu) + AMP + diphosphate. Its function is as follows. Catalyzes the attachment of glutamate to tRNA(Glu) in a two-step reaction: glutamate is first activated by ATP to form Glu-AMP and then transferred to the acceptor end of tRNA(Glu). The polypeptide is Glutamate--tRNA ligase (Citrifermentans bemidjiense (strain ATCC BAA-1014 / DSM 16622 / JCM 12645 / Bem) (Geobacter bemidjiensis)).